A 276-amino-acid polypeptide reads, in one-letter code: uncharacterized protein (276 aa).

This is an uncharacterized protein from Methanocaldococcus jannaschii (strain ATCC 43067 / DSM 2661 / JAL-1 / JCM 10045 / NBRC 100440) (Methanococcus jannaschii).